We begin with the raw amino-acid sequence, 122 residues long: Large ribosomal subunit protein uL14c (122 aa).

It belongs to the universal ribosomal protein uL14 family. As to quaternary structure, part of the 50S ribosomal subunit.

The protein resides in the plastid. It is found in the chloroplast. Binds to 23S rRNA. The sequence is that of Large ribosomal subunit protein uL14c from Physcomitrium patens (Spreading-leaved earth moss).